The primary structure comprises 721 residues: Cytosolic carboxypeptidase 2 (721 aa).

The segment at 43–71 (TASDMINSSSPSESSDSNLEEEQEESKPC) is disordered. Residues 50–59 (SSSPSESSDS) are compositionally biased toward low complexity. In terms of domain architecture, Peptidase M14 spans 334 to 605 (YPYTYSKLQH…CFCDTLLDFC (272 aa)). Zn(2+)-binding residues include H400, E403, and H496. The Proton donor/acceptor role is filled by E569. Residues 645 to 721 (DIESSTSGSN…TQHGDTEDQS (77 aa)) form a disordered region. Positions 647–660 (ESSTSGSNSTESDG) are enriched in low complexity. The span at 672–688 (GKKKLLRSRKERNRLRQ) shows a compositional bias: basic residues. Polar residues predominate over residues 703 to 714 (YSCQTLNATTQH).

This sequence belongs to the peptidase M14 family. The cofactor is Zn(2+).

It localises to the cytoplasm. It is found in the cytosol. The protein resides in the cytoskeleton. Its subcellular location is the microtubule organizing center. The protein localises to the centrosome. It localises to the centriole. It is found in the cilium basal body. It carries out the reaction (L-glutamyl)(n+1)-gamma-L-glutamyl-L-glutamyl-[protein] + H2O = (L-glutamyl)(n)-gamma-L-glutamyl-L-glutamyl-[protein] + L-glutamate. Metallocarboxypeptidase that mediates deglutamylation of target proteins. Catalyzes the deglutamylation of polyglutamate side chains generated by post-translational polyglutamylation in proteins such as tubulins. Also removes gene-encoded polyglutamates from the carboxy-terminus of target proteins such as MYLK. Does not show detyrosinase or deglycylase activities from the carboxy-terminus of tubulin. In terms of biological role, metallocarboxypeptidase that mediates deglutamylation of tubulin and non-tubulin target proteins. Catalyzes the removal of polyglutamate side chains present on the gamma-carboxyl group of glutamate residues within the C-terminal tail of tubulin protein. Specifically cleaves tubulin long-side-chains, while it is not able to remove the branching point glutamate. Also catalyzes the removal of polyglutamate residues from the carboxy-terminus of non-tubulin proteins. This Danio rerio (Zebrafish) protein is Cytosolic carboxypeptidase 2 (zte25).